Consider the following 391-residue polypeptide: Elongation factor Tu (391 aa).

Positions 10 to 201 (KPHVNIGTIG…AVDAYIPTPE (192 aa)) constitute a tr-type G domain. Residues 19 to 26 (GHVDHGKT) form a G1 region. 19–26 (GHVDHGKT) is a binding site for GTP. Residue Thr-26 coordinates Mg(2+). Positions 55 to 59 (GITIS) are G2. Residues 76–79 (DCPG) are G3. GTP is bound by residues 76–80 (DCPGH) and 131–134 (NKVD). The interval 131 to 134 (NKVD) is G4. A G5 region spans residues 169-171 (SAL).

The protein belongs to the TRAFAC class translation factor GTPase superfamily. Classic translation factor GTPase family. EF-Tu/EF-1A subfamily. In terms of assembly, monomer.

The protein localises to the cytoplasm. It carries out the reaction GTP + H2O = GDP + phosphate + H(+). In terms of biological role, GTP hydrolase that promotes the GTP-dependent binding of aminoacyl-tRNA to the A-site of ribosomes during protein biosynthesis. The polypeptide is Elongation factor Tu (Rhizobium meliloti (strain 1021) (Ensifer meliloti)).